A 407-amino-acid polypeptide reads, in one-letter code: 4-hydroxy-3-methylbut-2-en-1-yl diphosphate synthase (ferredoxin) (407 aa).

The [4Fe-4S] cluster site is built by C312, C315, C346, and E353.

It belongs to the IspG family. It depends on [4Fe-4S] cluster as a cofactor.

The catalysed reaction is (2E)-4-hydroxy-3-methylbut-2-enyl diphosphate + 2 oxidized [2Fe-2S]-[ferredoxin] + H2O = 2-C-methyl-D-erythritol 2,4-cyclic diphosphate + 2 reduced [2Fe-2S]-[ferredoxin] + H(+). The protein operates within isoprenoid biosynthesis; isopentenyl diphosphate biosynthesis via DXP pathway; isopentenyl diphosphate from 1-deoxy-D-xylulose 5-phosphate: step 5/6. Its function is as follows. Converts 2C-methyl-D-erythritol 2,4-cyclodiphosphate (ME-2,4cPP) into 1-hydroxy-2-methyl-2-(E)-butenyl 4-diphosphate. This chain is 4-hydroxy-3-methylbut-2-en-1-yl diphosphate synthase (ferredoxin), found in Synechococcus elongatus (strain ATCC 33912 / PCC 7942 / FACHB-805) (Anacystis nidulans R2).